The primary structure comprises 175 residues: uncharacterized protein (175 aa).

To yeast YER187w.

This is an uncharacterized protein from Saccharomyces cerevisiae (strain ATCC 204508 / S288c) (Baker's yeast).